We begin with the raw amino-acid sequence, 267 residues long: 3-methyl-2-oxobutanoate hydroxymethyltransferase (267 aa).

The Mg(2+) site is built by Asp-41 and Asp-80. 3-methyl-2-oxobutanoate contacts are provided by residues 41–42 (DS), Asp-80, and Lys-109. Residue Glu-111 participates in Mg(2+) binding. Glu-178 (proton acceptor) is an active-site residue.

It belongs to the PanB family. As to quaternary structure, homodecamer; pentamer of dimers. Requires Mg(2+) as cofactor.

The protein localises to the cytoplasm. The catalysed reaction is 3-methyl-2-oxobutanoate + (6R)-5,10-methylene-5,6,7,8-tetrahydrofolate + H2O = 2-dehydropantoate + (6S)-5,6,7,8-tetrahydrofolate. The protein operates within cofactor biosynthesis; (R)-pantothenate biosynthesis; (R)-pantoate from 3-methyl-2-oxobutanoate: step 1/2. In terms of biological role, catalyzes the reversible reaction in which hydroxymethyl group from 5,10-methylenetetrahydrofolate is transferred onto alpha-ketoisovalerate to form ketopantoate. This Kosmotoga olearia (strain ATCC BAA-1733 / DSM 21960 / TBF 19.5.1) protein is 3-methyl-2-oxobutanoate hydroxymethyltransferase.